Consider the following 199-residue polypeptide: Imidazoleglycerol-phosphate dehydratase (199 aa).

It belongs to the imidazoleglycerol-phosphate dehydratase family.

Its subcellular location is the cytoplasm. It catalyses the reaction D-erythro-1-(imidazol-4-yl)glycerol 3-phosphate = 3-(imidazol-4-yl)-2-oxopropyl phosphate + H2O. Its pathway is amino-acid biosynthesis; L-histidine biosynthesis; L-histidine from 5-phospho-alpha-D-ribose 1-diphosphate: step 6/9. The polypeptide is Imidazoleglycerol-phosphate dehydratase (Rhodospirillum rubrum (strain ATCC 11170 / ATH 1.1.1 / DSM 467 / LMG 4362 / NCIMB 8255 / S1)).